A 215-amino-acid polypeptide reads, in one-letter code: Autophagy-related protein 101 (215 aa).

The disordered stretch occupies residues 124–147; it reads PVGKSHHSKLVMDPGEASEERSSR.

Belongs to the ATG101 family. Interacts with ATG11 and ATG13A.

It is found in the cytoplasmic vesicle. Its subcellular location is the autophagosome. Functionally, accessory protein involved in autophagy. Acts as a scaffold protein of the ATG1-ATG13 complex for faithful delivery of autophagic vesicles to the vacuole. Required for selective mitophagy. This is Autophagy-related protein 101 from Arabidopsis thaliana (Mouse-ear cress).